Reading from the N-terminus, the 277-residue chain is Phosphatidylglycerol--prolipoprotein diacylglyceryl transferase (277 aa).

4 helical membrane-spanning segments follow: residues 18-38, 51-71, 89-109, and 116-136; these read ISVK…LLLA, IIVD…RIYY, IWHG…TAVI, and ISFW…QAIG. Arg-137 contributes to the a 1,2-diacyl-sn-glycero-3-phospho-(1'-sn-glycerol) binding site. 3 helical membrane-spanning segments follow: residues 177–197, 205–225, and 235–255; these read QPTF…LLII, GELF…IEGM, and FRVS…LIIY.

Belongs to the Lgt family.

It localises to the cell membrane. The enzyme catalyses L-cysteinyl-[prolipoprotein] + a 1,2-diacyl-sn-glycero-3-phospho-(1'-sn-glycerol) = an S-1,2-diacyl-sn-glyceryl-L-cysteinyl-[prolipoprotein] + sn-glycerol 1-phosphate + H(+). It participates in protein modification; lipoprotein biosynthesis (diacylglyceryl transfer). Catalyzes the transfer of the diacylglyceryl group from phosphatidylglycerol to the sulfhydryl group of the N-terminal cysteine of a prolipoprotein, the first step in the formation of mature lipoproteins. The polypeptide is Phosphatidylglycerol--prolipoprotein diacylglyceryl transferase (Listeria innocua serovar 6a (strain ATCC BAA-680 / CLIP 11262)).